We begin with the raw amino-acid sequence, 206 residues long: Large ribosomal subunit protein uL3 (206 aa).

The tract at residues 126–155 (HGHAGGPGAHGSRFHRHPGSMGANSTPSRV) is disordered.

The protein belongs to the universal ribosomal protein uL3 family. In terms of assembly, part of the 50S ribosomal subunit. Forms a cluster with proteins L14 and L19.

Its function is as follows. One of the primary rRNA binding proteins, it binds directly near the 3'-end of the 23S rRNA, where it nucleates assembly of the 50S subunit. The sequence is that of Large ribosomal subunit protein uL3 from Leptospira interrogans serogroup Icterohaemorrhagiae serovar copenhageni (strain Fiocruz L1-130).